The chain runs to 363 residues: Phosphoserine aminotransferase (363 aa).

Residue R42 participates in L-glutamate binding. Pyridoxal 5'-phosphate is bound by residues 76 to 77 (GR), W102, T156, D175, and Q198. K199 carries the N6-(pyridoxal phosphate)lysine modification. Residue 240–241 (NT) participates in pyridoxal 5'-phosphate binding.

This sequence belongs to the class-V pyridoxal-phosphate-dependent aminotransferase family. SerC subfamily. As to quaternary structure, homodimer. Requires pyridoxal 5'-phosphate as cofactor.

The protein localises to the cytoplasm. The enzyme catalyses O-phospho-L-serine + 2-oxoglutarate = 3-phosphooxypyruvate + L-glutamate. It carries out the reaction 4-(phosphooxy)-L-threonine + 2-oxoglutarate = (R)-3-hydroxy-2-oxo-4-phosphooxybutanoate + L-glutamate. It participates in amino-acid biosynthesis; L-serine biosynthesis; L-serine from 3-phospho-D-glycerate: step 2/3. The protein operates within cofactor biosynthesis; pyridoxine 5'-phosphate biosynthesis; pyridoxine 5'-phosphate from D-erythrose 4-phosphate: step 3/5. Catalyzes the reversible conversion of 3-phosphohydroxypyruvate to phosphoserine and of 3-hydroxy-2-oxo-4-phosphonooxybutanoate to phosphohydroxythreonine. This Shewanella sp. (strain MR-4) protein is Phosphoserine aminotransferase.